A 337-amino-acid polypeptide reads, in one-letter code: Holliday junction branch migration complex subunit RuvB (337 aa).

The segment at 4–185 (ADRLISNSFE…FGITQRLEYY (182 aa)) is large ATPase domain (RuvB-L). ATP contacts are provided by residues Ile24, Arg25, Gly66, Lys69, Thr70, Thr71, 132–134 (EDY), Arg175, Tyr185, and Arg222. Thr70 is a Mg(2+) binding site. The small ATPAse domain (RuvB-S) stretch occupies residues 186 to 256 (KVDDLKDIVQ…TAKKALDMLD (71 aa)). The tract at residues 259 to 337 (SSGFDYMDRK…HFGLDIPEAR (79 aa)) is head domain (RuvB-H). Residues Arg314 and Arg319 each contribute to the DNA site.

It belongs to the RuvB family. In terms of assembly, homohexamer. Forms an RuvA(8)-RuvB(12)-Holliday junction (HJ) complex. HJ DNA is sandwiched between 2 RuvA tetramers; dsDNA enters through RuvA and exits via RuvB. An RuvB hexamer assembles on each DNA strand where it exits the tetramer. Each RuvB hexamer is contacted by two RuvA subunits (via domain III) on 2 adjacent RuvB subunits; this complex drives branch migration. In the full resolvosome a probable DNA-RuvA(4)-RuvB(12)-RuvC(2) complex forms which resolves the HJ.

Its subcellular location is the cytoplasm. The enzyme catalyses ATP + H2O = ADP + phosphate + H(+). The RuvA-RuvB-RuvC complex processes Holliday junction (HJ) DNA during genetic recombination and DNA repair, while the RuvA-RuvB complex plays an important role in the rescue of blocked DNA replication forks via replication fork reversal (RFR). RuvA specifically binds to HJ cruciform DNA, conferring on it an open structure. The RuvB hexamer acts as an ATP-dependent pump, pulling dsDNA into and through the RuvAB complex. RuvB forms 2 homohexamers on either side of HJ DNA bound by 1 or 2 RuvA tetramers; 4 subunits per hexamer contact DNA at a time. Coordinated motions by a converter formed by DNA-disengaged RuvB subunits stimulates ATP hydrolysis and nucleotide exchange. Immobilization of the converter enables RuvB to convert the ATP-contained energy into a lever motion, pulling 2 nucleotides of DNA out of the RuvA tetramer per ATP hydrolyzed, thus driving DNA branch migration. The RuvB motors rotate together with the DNA substrate, which together with the progressing nucleotide cycle form the mechanistic basis for DNA recombination by continuous HJ branch migration. Branch migration allows RuvC to scan DNA until it finds its consensus sequence, where it cleaves and resolves cruciform DNA. In Photobacterium profundum (strain SS9), this protein is Holliday junction branch migration complex subunit RuvB.